Here is a 157-residue protein sequence, read N- to C-terminus: uncharacterized protein (157 aa).

In terms of domain architecture, N-acetyltransferase spans 9 to 154 (LLINYKTLDE…ETNLNAVTNE (146 aa)).

This is an uncharacterized protein from Bacillus cereus (strain ATCC 14579 / DSM 31 / CCUG 7414 / JCM 2152 / NBRC 15305 / NCIMB 9373 / NCTC 2599 / NRRL B-3711).